The primary structure comprises 60 residues: Large ribosomal subunit protein uL29 (60 aa).

This sequence belongs to the universal ribosomal protein uL29 family.

The chain is Large ribosomal subunit protein uL29 from Fusobacterium nucleatum subsp. nucleatum (strain ATCC 25586 / DSM 15643 / BCRC 10681 / CIP 101130 / JCM 8532 / KCTC 2640 / LMG 13131 / VPI 4355).